We begin with the raw amino-acid sequence, 1015 residues long: MAHIYRLLLLLLSNLWFSAAAQNQSETEWPLHDNGLSKVVQWDHYSFQVNGQRIFIFSGEFHYWRIPVPELWRDILEKVKATGFTAFAFYSSWAYHAPNNRTVDFSTGARDITPIFELAKELGMYMIVRPGPYVNAEASAGGFPLWLTTGEYGSLRNDDPRYTAAWTPYFANMSQITSKYQVTDGHNTLVYQIENEYGQQWIGDPKDRNPNKTAVAYMELLEASALENGITVPLTSNDPNMNSKSWGSDWSNAGGNVDVAGLDSYPSCWTCDVSQCTSTNGEYVPYKVIDYYDYFQEVQPTLPSFMPEFQGGSYNPWAGPEGGCPQDTGAEFANLFYRWNIGQRVTAMSLYMLYGGTNWGAIAAPVTATSYDYSAPISEDRSIGAKYSETKLLALFTRTAKDLTMTEAIGNGTQYTTNTAVRAFELRNPQTNAGFYVTFHNDTTVGGNQAFKLHVNTSVGALTVPKNEGVIQLNGHQSKIIVTDFTLGKRTLLYSTAEVLTYAVFENRPTLVLWVPTGESGEFAIKGTKSGKVENGDGCSGINFKREKDYLVVNFSQAKGLSVLRLDNGVRVVLLDKAAAYRFWAPALTDDPIVQETETVLVHGPYLVRSASVSKSTLALRGDSVEKTTLEIFAPHSVRKITWNGKEVKTSQTPYGSLKATLAAPPTIKLPALTSWRSNDSLPERLPSYDDSGPAWIEANHMTTSNPSPPATLPVLYADEYGFHNGVRLWRGYFNGSASGVFLNIQGGSAFGWSAWLNGHFLDSHLGTATTSQANKTLTFSSSILNPTENVLLIVHDDTGHDQTTGALNPRGIIEARLLSNDTSSPAPGFTQWRIAGTAGGESNLDPIRGVFNEDGLFAERMGWHLPGFDDSAWTPENSTTSASSALSFTGATVRFFRTVVPLDIPAGLDVSISFVLSTPSAAPKGYRAQLFVNGYQYGRYNPHIGNQVVFPVPPGILDYQGDNTIGLAVWAQTEEGAGIQVDWKVNYVADSSLSVAGFGKGLRPGWTEERLKFA.

An N-terminal signal peptide occupies residues 1–21; that stretch reads MAHIYRLLLLLLSNLWFSAAA. Asn-23 is a glycosylation site (N-linked (GlcNAc...) asparagine). Residue Tyr-90 coordinates substrate. The N-linked (GlcNAc...) asparagine glycan is linked to Asn-100. The substrate site is built by Asn-135, Ala-136, and Glu-137. Residue Asn-172 is glycosylated (N-linked (GlcNAc...) asparagine). Asn-195 provides a ligand contact to substrate. Glu-196 acts as the Proton donor in catalysis. Residue Asn-211 is glycosylated (N-linked (GlcNAc...) asparagine). Residue Tyr-265 coordinates substrate. Residues Cys-271 and Cys-324 are joined by a disulfide bond. Glu-308 (nucleophile) is an active-site residue. Tyr-373 contacts substrate. N-linked (GlcNAc...) asparagine glycans are attached at residues Asn-411, Asn-441, Asn-456, Asn-554, Asn-679, Asn-735, Asn-775, Asn-821, and Asn-878.

This sequence belongs to the glycosyl hydrolase 35 family.

It localises to the secreted. The catalysed reaction is Hydrolysis of terminal non-reducing beta-D-galactose residues in beta-D-galactosides.. Functionally, cleaves beta-linked terminal galactosyl residues from gangliosides, glycoproteins, and glycosaminoglycans. In Neosartorya fischeri (strain ATCC 1020 / DSM 3700 / CBS 544.65 / FGSC A1164 / JCM 1740 / NRRL 181 / WB 181) (Aspergillus fischerianus), this protein is Probable beta-galactosidase B (lacB).